A 322-amino-acid chain; its full sequence is Ribose-phosphate pyrophosphokinase 1 (322 aa).

ATP contacts are provided by residues Asp-39–Glu-41 and Arg-98–Gln-99. Residues His-132 and Asp-173 each coordinate Mg(2+). Lys-196 is a catalytic residue. D-ribose 5-phosphate-binding positions include Arg-198, Asp-224, and Asp-228 to Thr-232.

It belongs to the ribose-phosphate pyrophosphokinase family. Class I subfamily. Homohexamer. The cofactor is Mg(2+).

The protein localises to the cytoplasm. The enzyme catalyses D-ribose 5-phosphate + ATP = 5-phospho-alpha-D-ribose 1-diphosphate + AMP + H(+). Its pathway is metabolic intermediate biosynthesis; 5-phospho-alpha-D-ribose 1-diphosphate biosynthesis; 5-phospho-alpha-D-ribose 1-diphosphate from D-ribose 5-phosphate (route I): step 1/1. In terms of biological role, involved in the biosynthesis of the central metabolite phospho-alpha-D-ribosyl-1-pyrophosphate (PRPP) via the transfer of pyrophosphoryl group from ATP to 1-hydroxyl of ribose-5-phosphate (Rib-5-P). The polypeptide is Ribose-phosphate pyrophosphokinase 1 (Streptococcus agalactiae serotype III (strain NEM316)).